Reading from the N-terminus, the 464-residue chain is Trigger factor (464 aa).

Positions 162 to 243 (GDFISIDLSA…VGTVKERELP (82 aa)) constitute a PPIase FKBP-type domain. Positions 428–464 (GASVDTAELFGNGEADTEEAASTDEVASDSAEGEDQK) are disordered.

This sequence belongs to the FKBP-type PPIase family. Tig subfamily.

It localises to the cytoplasm. It catalyses the reaction [protein]-peptidylproline (omega=180) = [protein]-peptidylproline (omega=0). Functionally, involved in protein export. Acts as a chaperone by maintaining the newly synthesized protein in an open conformation. Functions as a peptidyl-prolyl cis-trans isomerase. The polypeptide is Trigger factor (Rhodococcus opacus (strain B4)).